The following is a 302-amino-acid chain: Sulfate adenylyltransferase subunit 2 (302 aa).

The tract at residues 279-302 (ERQGRAIDHDSSGSMELKKRQGYF) is disordered. The span at 280 to 302 (RQGRAIDHDSSGSMELKKRQGYF) shows a compositional bias: basic and acidic residues.

Belongs to the PAPS reductase family. CysD subfamily. As to quaternary structure, heterodimer composed of CysD, the smaller subunit, and CysN.

It carries out the reaction sulfate + ATP + H(+) = adenosine 5'-phosphosulfate + diphosphate. The protein operates within sulfur metabolism; hydrogen sulfide biosynthesis; sulfite from sulfate: step 1/3. Its function is as follows. With CysN forms the ATP sulfurylase (ATPS) that catalyzes the adenylation of sulfate producing adenosine 5'-phosphosulfate (APS) and diphosphate, the first enzymatic step in sulfur assimilation pathway. APS synthesis involves the formation of a high-energy phosphoric-sulfuric acid anhydride bond driven by GTP hydrolysis by CysN coupled to ATP hydrolysis by CysD. The sequence is that of Sulfate adenylyltransferase subunit 2 from Aliivibrio fischeri (strain ATCC 700601 / ES114) (Vibrio fischeri).